Here is a 104-residue protein sequence, read N- to C-terminus: MSEFKNVTIIREANVYFNGGVTSRTIIFDSGCKKTLGVMMPGDYEFNTGSAELMEILSGDLDVLLPGADSWQTIKGGESFDVPANAAFKLKVKSLTDYCCSFLD.

It belongs to the nucleoside phosphorylase PpnP family.

The enzyme catalyses a purine D-ribonucleoside + phosphate = a purine nucleobase + alpha-D-ribose 1-phosphate. It catalyses the reaction adenosine + phosphate = alpha-D-ribose 1-phosphate + adenine. The catalysed reaction is cytidine + phosphate = cytosine + alpha-D-ribose 1-phosphate. It carries out the reaction guanosine + phosphate = alpha-D-ribose 1-phosphate + guanine. The enzyme catalyses inosine + phosphate = alpha-D-ribose 1-phosphate + hypoxanthine. It catalyses the reaction thymidine + phosphate = 2-deoxy-alpha-D-ribose 1-phosphate + thymine. The catalysed reaction is uridine + phosphate = alpha-D-ribose 1-phosphate + uracil. It carries out the reaction xanthosine + phosphate = alpha-D-ribose 1-phosphate + xanthine. In terms of biological role, catalyzes the phosphorolysis of diverse nucleosides, yielding D-ribose 1-phosphate and the respective free bases. Can use uridine, adenosine, guanosine, cytidine, thymidine, inosine and xanthosine as substrates. Also catalyzes the reverse reactions. This Geotalea uraniireducens (strain Rf4) (Geobacter uraniireducens) protein is Pyrimidine/purine nucleoside phosphorylase.